A 334-amino-acid polypeptide reads, in one-letter code: Adenosine deaminase (334 aa).

Residues H16 and H18 each contribute to the Zn(2+) site. Substrate-binding residues include H18, D20, and G173. H200 serves as a coordination point for Zn(2+). Catalysis depends on E203, which acts as the Proton donor. D281 contacts Zn(2+).

It belongs to the metallo-dependent hydrolases superfamily. Adenosine and AMP deaminases family. Adenosine deaminase subfamily. Zn(2+) is required as a cofactor.

It catalyses the reaction adenosine + H2O + H(+) = inosine + NH4(+). The enzyme catalyses 2'-deoxyadenosine + H2O + H(+) = 2'-deoxyinosine + NH4(+). Catalyzes the hydrolytic deamination of adenosine and 2-deoxyadenosine. The protein is Adenosine deaminase of Clostridium acetobutylicum (strain ATCC 824 / DSM 792 / JCM 1419 / IAM 19013 / LMG 5710 / NBRC 13948 / NRRL B-527 / VKM B-1787 / 2291 / W).